A 261-amino-acid chain; its full sequence is Sepiapterin reductase (261 aa).

M1 is subject to N-acetylmethionine. 14 to 20 (GASRGFG) provides a ligand contact to NADP(+). Phosphoserine is present on S32. Residues 42 to 43 (RN) and 69 to 70 (DL) contribute to the NADP(+) site. Phosphoserine is present on S103. Substrate is bound by residues 157 to 158 (SL) and Y170. Residue K174 participates in NADP(+) binding. Substrate is bound at residue G199. Position 201-206 (201-206 (LDTDMQ)) interacts with NADP(+). S213 is subject to Phosphoserine; by CaMK2; in vitro. D257 serves as a coordination point for substrate.

The protein belongs to the sepiapterin reductase family. As to quaternary structure, homodimer. In vitro phosphorylation of Ser-213 by CaMK2 does not change kinetic parameters.

It is found in the cytoplasm. The enzyme catalyses L-erythro-7,8-dihydrobiopterin + NADP(+) = L-sepiapterin + NADPH + H(+). It catalyses the reaction (6R)-L-erythro-5,6,7,8-tetrahydrobiopterin + 2 NADP(+) = 6-pyruvoyl-5,6,7,8-tetrahydropterin + 2 NADPH + 2 H(+). Its function is as follows. Catalyzes the final one or two reductions in tetra-hydrobiopterin biosynthesis to form 5,6,7,8-tetrahydrobiopterin. This Homo sapiens (Human) protein is Sepiapterin reductase (SPR).